The chain runs to 279 residues: Diaminopimelate epimerase (279 aa).

Positions 13, 46, and 66 each coordinate substrate. Catalysis depends on Cys-75, which acts as the Proton donor. Substrate-binding positions include 76–77 (GN), Asn-161, Asn-194, and 212–213 (ER). The active-site Proton acceptor is Cys-221. Substrate is bound at residue 222–223 (GT).

The protein belongs to the diaminopimelate epimerase family. Homodimer.

The protein resides in the cytoplasm. The enzyme catalyses (2S,6S)-2,6-diaminopimelate = meso-2,6-diaminopimelate. The protein operates within amino-acid biosynthesis; L-lysine biosynthesis via DAP pathway; DL-2,6-diaminopimelate from LL-2,6-diaminopimelate: step 1/1. Catalyzes the stereoinversion of LL-2,6-diaminopimelate (L,L-DAP) to meso-diaminopimelate (meso-DAP), a precursor of L-lysine and an essential component of the bacterial peptidoglycan. This Alkalilimnicola ehrlichii (strain ATCC BAA-1101 / DSM 17681 / MLHE-1) protein is Diaminopimelate epimerase.